The following is a 370-amino-acid chain: Queuine tRNA-ribosyltransferase (370 aa).

The active-site Proton acceptor is Asp93. Substrate is bound by residues 93–97 (DSGGF), Asp147, Gln189, and Gly216. The segment at 247–253 (GVGSPDC) is RNA binding. The active-site Nucleophile is the Asp266. Residues 271-275 (TRIAR) form an RNA binding; important for wobble base 34 recognition region. Residues Cys304, Cys306, Cys309, and His335 each coordinate Zn(2+).

The protein belongs to the queuine tRNA-ribosyltransferase family. As to quaternary structure, homodimer. Within each dimer, one monomer is responsible for RNA recognition and catalysis, while the other monomer binds to the replacement base PreQ1. Requires Zn(2+) as cofactor.

It catalyses the reaction 7-aminomethyl-7-carbaguanine + guanosine(34) in tRNA = 7-aminomethyl-7-carbaguanosine(34) in tRNA + guanine. It functions in the pathway tRNA modification; tRNA-queuosine biosynthesis. In terms of biological role, catalyzes the base-exchange of a guanine (G) residue with the queuine precursor 7-aminomethyl-7-deazaguanine (PreQ1) at position 34 (anticodon wobble position) in tRNAs with GU(N) anticodons (tRNA-Asp, -Asn, -His and -Tyr). Catalysis occurs through a double-displacement mechanism. The nucleophile active site attacks the C1' of nucleotide 34 to detach the guanine base from the RNA, forming a covalent enzyme-RNA intermediate. The proton acceptor active site deprotonates the incoming PreQ1, allowing a nucleophilic attack on the C1' of the ribose to form the product. After dissociation, two additional enzymatic reactions on the tRNA convert PreQ1 to queuine (Q), resulting in the hypermodified nucleoside queuosine (7-(((4,5-cis-dihydroxy-2-cyclopenten-1-yl)amino)methyl)-7-deazaguanosine). The polypeptide is Queuine tRNA-ribosyltransferase (Desulforamulus reducens (strain ATCC BAA-1160 / DSM 100696 / MI-1) (Desulfotomaculum reducens)).